Here is a 165-residue protein sequence, read N- to C-terminus: uncharacterized protein (165 aa).

The disordered stretch occupies residues 49-165 (QLKPQGPKRP…VAQQREIAQK (117 aa)). The span at 94 to 106 (MNNNNNYKISYTS) shows a compositional bias: polar residues. Over residues 120–135 (TLQRTTPQAQPTPQQP) the composition is skewed to low complexity. Residues 139–157 (SRSSGGITGAVNNRPQMVA) are compositionally biased toward polar residues.

This is an uncharacterized protein from Caenorhabditis elegans.